The sequence spans 435 residues: 3-phosphoshikimate 1-carboxyvinyltransferase (435 aa).

3-phosphoshikimate is bound by residues lysine 23, serine 24, and arginine 28. A phosphoenolpyruvate-binding site is contributed by lysine 23. The phosphoenolpyruvate site is built by glycine 96 and arginine 124. 3-phosphoshikimate contacts are provided by serine 167, serine 168, glutamine 169, serine 196, glutamate 311, and histidine 340. Glutamine 169 contacts phosphoenolpyruvate. Glutamate 311 (proton acceptor) is an active-site residue. Positions 344, 385, and 410 each coordinate phosphoenolpyruvate.

It belongs to the EPSP synthase family. As to quaternary structure, monomer.

It is found in the cytoplasm. The enzyme catalyses 3-phosphoshikimate + phosphoenolpyruvate = 5-O-(1-carboxyvinyl)-3-phosphoshikimate + phosphate. It participates in metabolic intermediate biosynthesis; chorismate biosynthesis; chorismate from D-erythrose 4-phosphate and phosphoenolpyruvate: step 6/7. Functionally, catalyzes the transfer of the enolpyruvyl moiety of phosphoenolpyruvate (PEP) to the 5-hydroxyl of shikimate-3-phosphate (S3P) to produce enolpyruvyl shikimate-3-phosphate and inorganic phosphate. The chain is 3-phosphoshikimate 1-carboxyvinyltransferase from Mycolicibacterium paratuberculosis (strain ATCC BAA-968 / K-10) (Mycobacterium paratuberculosis).